The primary structure comprises 184 residues: Protein C8 (184 aa).

The N-terminal stretch at 1–21 (MSSIRFIACLYLISIFGNCHE) is a signal peptide.

The protein belongs to the poxviridae C8 protein family.

The protein is Protein C8 of Vaccinia virus (strain Copenhagen) (VACV).